The sequence spans 233 residues: Large ribosomal subunit protein uL1 (233 aa).

Belongs to the universal ribosomal protein uL1 family. In terms of assembly, part of the 50S ribosomal subunit.

Its function is as follows. Binds directly to 23S rRNA. The L1 stalk is quite mobile in the ribosome, and is involved in E site tRNA release. Protein L1 is also a translational repressor protein, it controls the translation of the L11 operon by binding to its mRNA. This chain is Large ribosomal subunit protein uL1, found in Vibrio cholerae serotype O1 (strain ATCC 39315 / El Tor Inaba N16961).